Here is a 474-residue protein sequence, read N- to C-terminus: Aspartyl/glutamyl-tRNA(Asn/Gln) amidotransferase subunit B (474 aa).

This sequence belongs to the GatB/GatE family. GatB subfamily. In terms of assembly, heterotrimer of A, B and C subunits.

It catalyses the reaction L-glutamyl-tRNA(Gln) + L-glutamine + ATP + H2O = L-glutaminyl-tRNA(Gln) + L-glutamate + ADP + phosphate + H(+). The catalysed reaction is L-aspartyl-tRNA(Asn) + L-glutamine + ATP + H2O = L-asparaginyl-tRNA(Asn) + L-glutamate + ADP + phosphate + 2 H(+). Its function is as follows. Allows the formation of correctly charged Asn-tRNA(Asn) or Gln-tRNA(Gln) through the transamidation of misacylated Asp-tRNA(Asn) or Glu-tRNA(Gln) in organisms which lack either or both of asparaginyl-tRNA or glutaminyl-tRNA synthetases. The reaction takes place in the presence of glutamine and ATP through an activated phospho-Asp-tRNA(Asn) or phospho-Glu-tRNA(Gln). The protein is Aspartyl/glutamyl-tRNA(Asn/Gln) amidotransferase subunit B of Coprothermobacter proteolyticus (strain ATCC 35245 / DSM 5265 / OCM 4 / BT).